The following is a 182-amino-acid chain: Endoribonuclease YbeY (182 aa).

Histidine 115, histidine 119, and histidine 125 together coordinate Zn(2+).

The protein belongs to the endoribonuclease YbeY family. It depends on Zn(2+) as a cofactor.

The protein localises to the cytoplasm. Its function is as follows. Single strand-specific metallo-endoribonuclease involved in late-stage 70S ribosome quality control and in maturation of the 3' terminus of the 16S rRNA. This Bifidobacterium longum subsp. infantis (strain ATCC 15697 / DSM 20088 / JCM 1222 / NCTC 11817 / S12) protein is Endoribonuclease YbeY.